A 276-amino-acid chain; its full sequence is Undecaprenyl-diphosphatase 2 (276 aa).

Helical transmembrane passes span 1–21, 44–64, 87–107, 114–134, 150–170, 190–210, 220–240, and 251–271; these read MSLW…LFPV, QLLP…LWYF, GHLM…GLLL, VFHD…LLWV, MTFK…IPGF, AAEF…VLEL, LMDA…SVRF, and LASF…WFML.

Belongs to the UppP family.

Its subcellular location is the cell inner membrane. It carries out the reaction di-trans,octa-cis-undecaprenyl diphosphate + H2O = di-trans,octa-cis-undecaprenyl phosphate + phosphate + H(+). Functionally, catalyzes the dephosphorylation of undecaprenyl diphosphate (UPP). Confers resistance to bacitracin. The protein is Undecaprenyl-diphosphatase 2 of Burkholderia ambifaria (strain ATCC BAA-244 / DSM 16087 / CCUG 44356 / LMG 19182 / AMMD) (Burkholderia cepacia (strain AMMD)).